The chain runs to 258 residues: Small ribosomal subunit protein uS2 (258 aa).

This sequence belongs to the universal ribosomal protein uS2 family.

The protein is Small ribosomal subunit protein uS2 of Granulibacter bethesdensis (strain ATCC BAA-1260 / CGDNIH1).